A 544-amino-acid chain; its full sequence is CRISPR-associated endodeoxyribonuclease Cas12f2 (544 aa).

Positions 1-195 (MNMSKTTISV…KPNERETRYV (195 aa)) are recognition domain (REC). Residues 196–326 (HISKLESPSK…YLQYTYEAEV (131 aa)) are wedge domain (WED). Residues 327–334 (EANKEYAG) form a linker region. A ruvC-I region spans residues 335 to 485 (CLGVDIGCSK…VYVKPDYTSQ (151 aa)). Active-site residues include Asp339 and Glu430. The interval 486-520 (TCSSCGADKEKTERPSQAIFRCLNPTCRYYQRDIN) is target nucleic acid-binding (TNB). The Zn(2+) site is built by Cys487, Cys490, Cys507, and Cys512. A ruvC-II region spans residues 521 to 541 (ADFNAAVNIAKKALNNTEVVT). Residue Asp522 is part of the active site.

Belongs to the CRISPR-associated endonuclease Cas12f family. In terms of assembly, an asymmetric homodimer. Guide RNA is probably required for dimerization. Mg(2+) serves as cofactor. Zn(2+) is required as a cofactor.

Its function is as follows. CRISPR (clustered regularly interspaced short palindromic repeat), is an adaptive immune system that provides protection against mobile genetic elements (viruses, transposable elements and conjugative plasmids). CRISPR clusters contain sequences complementary to antecedent mobile elements and target invading nucleic acids. CRISPR clusters are transcribed and processed into CRISPR RNA (crRNA), which requires a trans-encoded small RNA (tracrRNA), but not this protein (in vitro). Recognizes a short motif in the CRISPR repeat sequences (the 5' PAM or protospacer adjacent motif, TTAT in this organism) to help distinguish self versus nonself, as targets within the CRISPR locus do not have PAMs. Upon expression in E.coli of this protein, a mini CRISPR array and the probable tracrRNA, has dsDNA endonuclease activity. DNA cleavage is centered around positions 21 base pairs 3' of PAM. The mini system does not protect E.coli against transformation by foreign plasmids. This is CRISPR-associated endodeoxyribonuclease Cas12f2 from Micrarchaeota archaeon (strain CG1_02_47_40).